The primary structure comprises 386 residues: 5-hydroxytryptamine receptor 1B (386 aa).

Positions 1-25 (MEEPGARCAPPPPAGSQTQTPSSNL) are disordered. At 1–42 (MEEPGARCAPPPPAGSQTQTPSSNLSHNCSADSYIYQDSIAL) the chain is on the extracellular side. Positions 16 to 25 (SQTQTPSSNL) are enriched in polar residues. N-linked (GlcNAc...) asparagine glycosylation is found at Asn-24 and Asn-28. The helical transmembrane segment at 43 to 68 (PWKVLLVALLALITLATTLSNAFVIA) threads the bilayer. Over 69–82 (TVYRTRKLHTPANY) the chain is Cytoplasmic. Residues 83 to 107 (LIASLAVTDLLVSILVMPISTMYTV) form a helical membrane-spanning segment. Residues 108-115 (TGRWTLGQ) lie on the Extracellular side of the membrane. Residues 116 to 141 (VVCDFWLSSDITCCTASIMHLCVIAL) traverse the membrane as a helical segment. A disulfide bridge connects residues Cys-118 and Cys-195. The ergotamine site is built by Asp-125 and Thr-130. The DRY motif; important for ligand-induced conformation changes and signaling motif lies at 142-144 (DRY). The Cytoplasmic segment spans residues 142–161 (DRYWAITDAVEYSAKRTPRR). Residues 162 to 180 (AAVMIALVWVFSISISLPR) traverse the membrane as a helical segment. The Extracellular portion of the chain corresponds to 181 to 201 (FFWRQAKAEEEVLDCLVNTDH). Val-197 provides a ligand contact to ergotamine. Residues 202–225 (VLYTVYSTVGAFYLPTLLLIALYG) traverse the membrane as a helical segment. Residues 226–311 (RIYVEARSRI…AARERKATKT (86 aa)) are Cytoplasmic-facing. Residues 253–272 (ISDSPGSTSSVTSINSRVPD) form a disordered region. Residues 254–268 (SDSPGSTSSVTSINS) show a composition bias toward low complexity. The helical transmembrane segment at 312-333 (LGIILGAFIVCWLPFFIISLVM) threads the bilayer. The Extracellular segment spans residues 334–343 (PICKDACWFH). The chain crosses the membrane as a helical span at residues 344-366 (MAIFDFFNWLGYLNSLINPIIYT). The NPxxY motif; important for ligand-induced conformation changes and signaling motif lies at 361–365 (NPIIY). The Cytoplasmic portion of the chain corresponds to 367–386 (MPNEDFKQAFHKLIRFKCTG). Residue Cys-384 is the site of S-palmitoyl cysteine attachment.

Belongs to the G-protein coupled receptor 1 family. Homodimer. Heterodimer with HTR1D. Phosphorylated. Desensitization of the receptor may be mediated by its phosphorylation. Post-translationally, palmitoylated.

Its subcellular location is the cell membrane. Functionally, G-protein coupled receptor for 5-hydroxytryptamine (serotonin). Also functions as a receptor for ergot alkaloid derivatives, various anxiolytic and antidepressant drugs and other psychoactive substances, such as lysergic acid diethylamide (LSD). Ligand binding causes a conformation change that triggers signaling via guanine nucleotide-binding proteins (G proteins) and modulates the activity of downstream effectors, such as adenylate cyclase. HTR1B is coupled to G(i)/G(o) G alpha proteins and mediates inhibitory neurotransmission by inhibiting adenylate cyclase activity. Arrestin family members inhibit signaling via G proteins and mediate activation of alternative signaling pathways. Regulates the release of 5-hydroxytryptamine, dopamine and acetylcholine in the brain, and thereby affects neural activity, nociceptive processing, pain perception, mood and behavior. Besides, plays a role in vasoconstriction of cerebral arteries. The protein is 5-hydroxytryptamine receptor 1B (HTR1B) of Spalax ehrenbergi (Middle East blind mole rat).